We begin with the raw amino-acid sequence, 326 residues long: Protein FAM110C (326 aa).

Disordered regions lie at residues 1-37 (MRALPTLDSLARTRPSLGDSRAAEGTLTRQPANKSAV), 51-80 (TLGSSRGPVSENRVPEAPGVQHRNPIPSTL), and 201-221 (VELRASRSKGLQRSQSDLSSR). Residues 209–221 (KGLQRSQSDLSSR) show a composition bias toward polar residues. Ser255 carries the post-translational modification Phosphoserine.

This sequence belongs to the FAM110 family. As to quaternary structure, interacts with AKT1; the interaction is transient and follows AKT1 activation. Interacts with PPP2CA and alpha-tubulin.

It is found in the cytoplasm. Its subcellular location is the cytoskeleton. The protein localises to the microtubule organizing center. It localises to the centrosome. The protein resides in the spindle pole. It is found in the nucleus. Its function is as follows. May play a role in microtubule organization. May play a role in cell spreading and cell migration of epithelial cells; the function may involve the AKT1 signaling pathway. In Rattus norvegicus (Rat), this protein is Protein FAM110C (Fam110c).